Consider the following 380-residue polypeptide: O-antigen polymerase (380 aa).

The next 12 membrane-spanning stretches (helical) occupy residues Met-1–Pro-21, Asn-27–Glu-47, Ala-55–Ile-75, Tyr-94–Leu-114, Ser-132–Ala-152, Phe-169–Val-189, Leu-201–Phe-221, Ile-229–Asn-249, Ile-282–Trp-302, Leu-306–Phe-326, Leu-332–Glu-352, and His-353–Met-373.

Its subcellular location is the cell inner membrane. The catalysed reaction is n lipid-linked O-antigen repeat units = a lipid-linked O antigen + (n-1) polyisoprenyl diphosphate.. The protein operates within bacterial outer membrane biogenesis; LPS O-antigen biosynthesis. Its function is as follows. Polymerase involved in the biosynthesis of the lipopolysaccharide (LPS). Catalyzes the polymerization of the O-antigen repeat units on the periplasmic face of the inner membrane, leading to the formation of the lipid-linked O-antigen molecule. The polypeptide is O-antigen polymerase (Shigella dysenteriae).